We begin with the raw amino-acid sequence, 399 residues long: Tryptophan synthase beta chain (399 aa).

The residue at position 92 (lysine 92) is an N6-(pyridoxal phosphate)lysine.

The protein belongs to the TrpB family. As to quaternary structure, tetramer of two alpha and two beta chains. Pyridoxal 5'-phosphate serves as cofactor.

It carries out the reaction (1S,2R)-1-C-(indol-3-yl)glycerol 3-phosphate + L-serine = D-glyceraldehyde 3-phosphate + L-tryptophan + H2O. It functions in the pathway amino-acid biosynthesis; L-tryptophan biosynthesis; L-tryptophan from chorismate: step 5/5. Functionally, the beta subunit is responsible for the synthesis of L-tryptophan from indole and L-serine. This Bordetella bronchiseptica (strain ATCC BAA-588 / NCTC 13252 / RB50) (Alcaligenes bronchisepticus) protein is Tryptophan synthase beta chain.